We begin with the raw amino-acid sequence, 131 residues long: Hypocretin neuropeptide precursor (131 aa).

Positions 1–33 (MNPPFAKVSWATVTLLLLLLLLPPAVLSPGAAA) are cleaved as a signal peptide. Gln-34 bears the Pyrrolidone carboxylic acid mark. 2 disulfide bridges follow: Cys-39/Cys-45 and Cys-40/Cys-47. Leu-66 carries the leucine amide modification. A Methionine amide modification is found at Met-97. The propeptide at 98–131 (GRRAGAEPAPRLCPGRRCLAAAASSVAPGGRSGI) is removed in mature form.

Belongs to the orexin family. In terms of processing, specific enzymatic cleavages at paired basic residues yield the different active peptides.

It is found in the rough endoplasmic reticulum. Its subcellular location is the cytoplasmic vesicle. It localises to the synapse. Neuropeptides that play a significant role in the regulation of food intake and sleep-wakefulness, possibly by coordinating the complex behavioral and physiologic responses of these complementary homeostatic functions. A broader role in the homeostatic regulation of energy metabolism, autonomic function, hormonal balance and the regulation of body fluids, is also suggested. Functionally, binds to orexin receptors HCRTR1/OX1R and HCRTR2/OX2R with a high affinity. Stimulates food intake. Modulates pituitary luteinizing hormone secretion in an ovarian steroid-dependent manner. In terms of biological role, binds to orexin receptor HCRTR2/OX2R only. Stimulates food intake. Modulates pituitary luteinizing hormone secretion in an ovarian steroid-dependent manner. The sequence is that of Hypocretin neuropeptide precursor (HCRT) from Sus scrofa (Pig).